The sequence spans 137 residues: Small ribosomal subunit protein uS11 (137 aa).

The interval methionine 1–histidine 30 is disordered. Over residues glycine 8 to lysine 21 the composition is skewed to basic residues.

This sequence belongs to the universal ribosomal protein uS11 family. As to quaternary structure, part of the 30S ribosomal subunit. Interacts with proteins S7 and S18. Binds to IF-3.

Functionally, located on the platform of the 30S subunit, it bridges several disparate RNA helices of the 16S rRNA. Forms part of the Shine-Dalgarno cleft in the 70S ribosome. This is Small ribosomal subunit protein uS11 from Mycolicibacterium vanbaalenii (strain DSM 7251 / JCM 13017 / BCRC 16820 / KCTC 9966 / NRRL B-24157 / PYR-1) (Mycobacterium vanbaalenii).